A 379-amino-acid chain; its full sequence is Galactose-1-phosphate uridylyltransferase (379 aa).

Positions methionine 1–serine 15 are enriched in polar residues. Residues methionine 1–methionine 20 form a disordered region. Position 75 (cysteine 75) interacts with Zn(2+). UDP-alpha-D-glucose is bound by residues alanine 81, asparagine 97–aspartate 98, and asparagine 173. Histidine 184 contacts Zn(2+). Histidine 186 serves as the catalytic Tele-UMP-histidine intermediate. Residue glutamine 188 participates in UDP-alpha-D-glucose binding. Zn(2+)-binding residues include glutamate 202, histidine 301, histidine 319, and histidine 321. UDP-alpha-D-glucose is bound by residues lysine 334–valine 337 and tyrosine 339–glutamate 340.

This sequence belongs to the galactose-1-phosphate uridylyltransferase type 1 family. As to quaternary structure, homodimer. Zn(2+) is required as a cofactor.

The catalysed reaction is alpha-D-galactose 1-phosphate + UDP-alpha-D-glucose = alpha-D-glucose 1-phosphate + UDP-alpha-D-galactose. It participates in carbohydrate metabolism; galactose metabolism. Its function is as follows. Plays an important role in galactose metabolism. The polypeptide is Galactose-1-phosphate uridylyltransferase (Galt) (Rattus norvegicus (Rat)).